The sequence spans 520 residues: GMP synthase [glutamine-hydrolyzing] (520 aa).

Positions 9 to 202 constitute a Glutamine amidotransferase type-1 domain; that stretch reads KILILDFGSQ…VRKICGCSGQ (194 aa). Cys86 acts as the Nucleophile in catalysis. Catalysis depends on residues His176 and Glu178. Residues 203-395 form the GMPS ATP-PPase domain; the sequence is WTPGHIIDDA…LGLPHQMVWR (193 aa). 230–236 contacts ATP; sequence SGGVDSS.

In terms of assembly, homodimer.

The enzyme catalyses XMP + L-glutamine + ATP + H2O = GMP + L-glutamate + AMP + diphosphate + 2 H(+). It participates in purine metabolism; GMP biosynthesis; GMP from XMP (L-Gln route): step 1/1. Its function is as follows. Catalyzes the synthesis of GMP from XMP. The chain is GMP synthase [glutamine-hydrolyzing] from Geobacter metallireducens (strain ATCC 53774 / DSM 7210 / GS-15).